The chain runs to 327 residues: tRNA uridine(34) hydroxylase (327 aa).

One can recognise a Rhodanese domain in the interval 123–217 (SDPEVLLVDT…YLEEVKQEES (95 aa)). Cysteine 177 acts as the Cysteine persulfide intermediate in catalysis.

The protein belongs to the TrhO family.

The enzyme catalyses uridine(34) in tRNA + AH2 + O2 = 5-hydroxyuridine(34) in tRNA + A + H2O. Catalyzes oxygen-dependent 5-hydroxyuridine (ho5U) modification at position 34 in tRNAs. The protein is tRNA uridine(34) hydroxylase of Shewanella piezotolerans (strain WP3 / JCM 13877).